We begin with the raw amino-acid sequence, 180 residues long: MTAVQSELISAIRSIPDYPKPGVMFRDITTLLGNPRAFRRAIDELVHPYAGTKVDKVAGIEARGFILGGAIAHQLSAGFIPIRKKGKLPHDTVRIAYSLEYGVDEMEMHRDAVAPGDKVILVDDLIATGGTAEGAAKLLKQMGADIVAACFIIDLPELGGRKKLEALGVNVRTLIEFEGH.

Belongs to the purine/pyrimidine phosphoribosyltransferase family. As to quaternary structure, homodimer.

The protein localises to the cytoplasm. It catalyses the reaction AMP + diphosphate = 5-phospho-alpha-D-ribose 1-diphosphate + adenine. It functions in the pathway purine metabolism; AMP biosynthesis via salvage pathway; AMP from adenine: step 1/1. Catalyzes a salvage reaction resulting in the formation of AMP, that is energically less costly than de novo synthesis. This chain is Adenine phosphoribosyltransferase, found in Rhizobium meliloti (strain 1021) (Ensifer meliloti).